A 245-amino-acid chain; its full sequence is 1-(5-phosphoribosyl)-5-[(5-phosphoribosylamino)methylideneamino] imidazole-4-carboxamide isomerase (245 aa).

D7 serves as the catalytic Proton acceptor. The active-site Proton donor is D129.

The protein belongs to the HisA/HisF family.

Its subcellular location is the cytoplasm. It carries out the reaction 1-(5-phospho-beta-D-ribosyl)-5-[(5-phospho-beta-D-ribosylamino)methylideneamino]imidazole-4-carboxamide = 5-[(5-phospho-1-deoxy-D-ribulos-1-ylimino)methylamino]-1-(5-phospho-beta-D-ribosyl)imidazole-4-carboxamide. Its pathway is amino-acid biosynthesis; L-histidine biosynthesis; L-histidine from 5-phospho-alpha-D-ribose 1-diphosphate: step 4/9. This is 1-(5-phosphoribosyl)-5-[(5-phosphoribosylamino)methylideneamino] imidazole-4-carboxamide isomerase from Shigella boydii serotype 4 (strain Sb227).